The primary structure comprises 310 residues: GPN-loop GTPase 2 (310 aa).

The residue at position 2 (Ala2) is an N-acetylalanine. Residue 19–24 participates in GTP binding; the sequence is GSGKTT. The short motif at 76-78 is the Gly-Pro-Asn (GPN)-loop; involved in dimer interface element; it reads GPN. 178-181 serves as a coordination point for GTP; sequence SKMD.

Belongs to the GPN-loop GTPase family. Heterodimers with GPN1 or GPN3. Binds to RNA polymerase II (RNAPII).

Its function is as follows. Small GTPase required for proper localization of RNA polymerase II and III (RNAPII and RNAPIII). May act at an RNAP assembly step prior to nuclear import. The chain is GPN-loop GTPase 2 from Mus musculus (Mouse).